A 470-amino-acid chain; its full sequence is UDP-glycosyltransferase 72D1 (470 aa).

UDP-alpha-D-glucose contacts are provided by residues serine 276, 343–345, 360–368, and 382–385; these read APQ, HCGWSSALE, and YAEQ.

It belongs to the UDP-glycosyltransferase family.

In Arabidopsis thaliana (Mouse-ear cress), this protein is UDP-glycosyltransferase 72D1 (UGT72D1).